A 240-amino-acid chain; its full sequence is Adapter protein MecA (240 aa).

Over residues 119-132 (QRKQQKKNHQDKQQ) the composition is skewed to basic and acidic residues. The disordered stretch occupies residues 119 to 138 (QRKQQKKNHQDKQQRRAHKP).

Belongs to the MecA family. As to quaternary structure, homodimer.

Enables the recognition and targeting of unfolded and aggregated proteins to the ClpC protease or to other proteins involved in proteolysis. This chain is Adapter protein MecA, found in Staphylococcus epidermidis (strain ATCC 35984 / DSM 28319 / BCRC 17069 / CCUG 31568 / BM 3577 / RP62A).